We begin with the raw amino-acid sequence, 160 residues long: Early E3 18.5 kDa glycoprotein (160 aa).

The first 17 residues, 1–17 (MIRYIILGLLTLASAHG), serve as a signal peptide directing secretion. Residues 18-124 (TTQKVDFKEP…PPQNCVENTG (107 aa)) lie on the Lumenal side of the membrane. 2 disulfides stabilise this stretch: Cys29/Cys46 and Cys40/Cys101. Residues Asn30 and Asn79 are each glycosylated (N-linked (GlcNAc...) asparagine; by host). A helical membrane pass occupies residues 125–145 (TFCCTAMLITVLALVCTLLYI). At 146-160 (KYKSRRSFIEEKKMP) the chain is on the cytoplasmic side. The Di-lysine motif motif lies at 157–160 (KKMP).

This sequence belongs to the adenoviridae E19 family. In terms of processing, both disulfide bonds are absolutely critical for the interaction with MHC antigens. N-glycosylated; high-mannose.

Its subcellular location is the host endoplasmic reticulum membrane. Its function is as follows. Binds and retains class I heavy chains in the endoplasmic reticulum during the early period of virus infection, thereby impairing their transport to the cell surface. Also delays the expression of class I alleles that it cannot affect by direct retention. Binds transporters associated with antigen processing (TAP) and acts as a tapasin inhibitor, preventing class I/TAP association. In consequence, infected cells are masked for immune recognition by cytotoxic T-lymphocytes. In Homo sapiens (Human), this protein is Early E3 18.5 kDa glycoprotein.